The following is a 134-amino-acid chain: NADH-quinone oxidoreductase subunit A (134 aa).

3 helical membrane-spanning segments follow: residues 14 to 34, 66 to 86, and 96 to 116; these read FFMF…LSWI, FYLI…LYAW, and IGFS…FYLV.

The protein belongs to the complex I subunit 3 family. As to quaternary structure, NDH-1 is composed of 13 different subunits. Subunits NuoA, H, J, K, L, M, N constitute the membrane sector of the complex.

The protein localises to the cell membrane. It carries out the reaction a quinone + NADH + 5 H(+)(in) = a quinol + NAD(+) + 4 H(+)(out). NDH-1 shuttles electrons from NADH, via FMN and iron-sulfur (Fe-S) centers, to quinones in the respiratory chain. The immediate electron acceptor for the enzyme in this species is believed to be ubiquinone. Couples the redox reaction to proton translocation (for every two electrons transferred, four hydrogen ions are translocated across the cytoplasmic membrane), and thus conserves the redox energy in a proton gradient. This is NADH-quinone oxidoreductase subunit A from Buchnera aphidicola subsp. Acyrthosiphon pisum (strain APS) (Acyrthosiphon pisum symbiotic bacterium).